The chain runs to 864 residues: Seed linoleate 9S-lipoxygenase-2 (864 aa).

A PLAT domain is found at 46-171 (SGINIIGSTL…LYKSPRIFFA (126 aa)). The Lipoxygenase domain occupies 174-864 (SYLPSETPSP…FRGIPNSISI (691 aa)). The disordered stretch occupies residues 230-264 (PILGGSSTHPYPRRGRTGRYPTRKDPNSEKPATET). Over residues 251 to 264 (TRKDPNSEKPATET) the composition is skewed to basic and acidic residues. The Fe cation site is built by His-524, His-529, His-716, Asn-720, and Ile-864.

It belongs to the lipoxygenase family. Fe cation is required as a cofactor.

Its subcellular location is the cytoplasm. The catalysed reaction is (9Z,12Z)-octadecadienoate + O2 = (9S)-hydroperoxy-(10E,12Z)-octadecadienoate. The protein operates within lipid metabolism; oxylipin biosynthesis. Functionally, plant lipoxygenase may be involved in a number of diverse aspects of plant physiology including growth and development, pest resistance, and senescence or responses to wounding. It catalyzes the hydroperoxidation of lipids containing a cis,cis-1,4-pentadiene structure. This is Seed linoleate 9S-lipoxygenase-2 (LOX1.2) from Pisum sativum (Garden pea).